We begin with the raw amino-acid sequence, 417 residues long: Protein FAM181B (417 aa).

The interval 104–147 is disordered; the sequence is CSGLMGTAPPRPASPSAADAPAKRPPGAPTVATPAHCKAAPRRE.

The protein belongs to the FAM181 family.

The polypeptide is Protein FAM181B (Fam181b) (Mus musculus (Mouse)).